Reading from the N-terminus, the 66-residue chain is Large ribosomal subunit protein uL29 (66 aa).

It belongs to the universal ribosomal protein uL29 family.

This chain is Large ribosomal subunit protein uL29, found in Borrelia garinii subsp. bavariensis (strain ATCC BAA-2496 / DSM 23469 / PBi) (Borreliella bavariensis).